Here is a 451-residue protein sequence, read N- to C-terminus: MDKFFEYIKNQNLSLEDEKLADKLDQLDQLSSIKEEFYFPITKDIATDLSRVKDEDLDKPVIYLTGNSLGLQPKEIEKQLVCNYLNDWRKYGVEGHHKGDHPFIHIDEEIQASLSKIVGALPSEVCPMNSLSTNIHVLLSNFYKPTQTRHKIIIEYGAFPSDLYVTESQIRHNSFNPETSLIKIKPRDGEYTLRTDDIINVLKEHGDSVAVVMLSGIQYFTGQFFDMKKITEVGHEIGAIVGWDLAHAAGNVELSLHDWNVDFACWCTYKYLNSGPGCIAGIFVHSKHTESFNLSTDSRLLGWFGNKLSNRFQKEKEFVAEDGALGFRMSNPSVADCTALRASLSVFEKAGGIKKLAEKSTIITGYLEYLLTHKLKTTDVQIITPSEANQRGSQLSLLIKGIKASQLKVNLSNSGIVCDVRDPDVIRVAPAPLYTSFNDVKYFIQKLNENM.

Residues Leu131, Ser132, 159-162 (FPSD), Ser215, Asp244, His247, and Tyr269 contribute to the pyridoxal 5'-phosphate site. Lys270 carries the post-translational modification N6-(pyridoxal phosphate)lysine. The pyridoxal 5'-phosphate site is built by Trp303 and Asn331.

It belongs to the kynureninase family. As to quaternary structure, homodimer. Requires pyridoxal 5'-phosphate as cofactor.

It is found in the cytoplasm. The enzyme catalyses L-kynurenine + H2O = anthranilate + L-alanine + H(+). It carries out the reaction 3-hydroxy-L-kynurenine + H2O = 3-hydroxyanthranilate + L-alanine + H(+). The protein operates within amino-acid degradation; L-kynurenine degradation; L-alanine and anthranilate from L-kynurenine: step 1/1. Its pathway is cofactor biosynthesis; NAD(+) biosynthesis; quinolinate from L-kynurenine: step 2/3. Functionally, catalyzes the cleavage of L-kynurenine (L-Kyn) and L-3-hydroxykynurenine (L-3OHKyn) into anthranilic acid (AA) and 3-hydroxyanthranilic acid (3-OHAA), respectively. This chain is Kynureninase, found in Dictyostelium discoideum (Social amoeba).